The primary structure comprises 122 residues: Serum amyloid A-1 protein (122 aa).

The signal sequence occupies residues 1–18 (MKPFVAIIFCFLILGVDS). The tract at residues 19-45 (QRWFQFMKEAGQGTRDMWRAYTDMREA) is important for amyloid formation. The disordered stretch occupies residues 100-122 (ANEWGRSGKDPNFFRPPGLPSKY).

Belongs to the SAA family. As to quaternary structure, homohexamer; dimer of trimers. Can form amyloid fibrils after partial proteolysis; the native, undenatured protein does not form amyloid fibrils (in vitro). Apolipoprotein of the HDL complex. Binds to heparin. In terms of tissue distribution, detected in liver, spleen and kidney.

Its subcellular location is the secreted. In terms of biological role, major acute phase protein. This is Serum amyloid A-1 protein (SAA1) from Mesocricetus auratus (Golden hamster).